Reading from the N-terminus, the 65-residue chain is Large ribosomal subunit protein bL35 (65 aa).

A disordered region spans residues 1 to 23; sequence MPKMKTHRGAAKRFKKTGTGKLK.

This sequence belongs to the bacterial ribosomal protein bL35 family.

The sequence is that of Large ribosomal subunit protein bL35 from Clostridium perfringens (strain ATCC 13124 / DSM 756 / JCM 1290 / NCIMB 6125 / NCTC 8237 / Type A).